We begin with the raw amino-acid sequence, 430 residues long: Adenylosuccinate synthetase (430 aa).

GTP-binding positions include Gly-12 to Lys-18 and Gly-40 to Thr-42. Asp-13 (proton acceptor) is an active-site residue. Residues Asp-13 and Gly-40 each contribute to the Mg(2+) site. Residues Asp-13–Lys-16, Asn-38–His-41, Thr-130, Arg-144, Gln-224, Thr-239, and Arg-303 each bind IMP. Residue His-41 is the Proton donor of the active site. A substrate-binding site is contributed by Thr-299–Arg-305. GTP-binding positions include Arg-305, Lys-331–Asp-333, and Ser-413–Ser-415.

This sequence belongs to the adenylosuccinate synthetase family. Homodimer. Requires Mg(2+) as cofactor.

It is found in the cytoplasm. The enzyme catalyses IMP + L-aspartate + GTP = N(6)-(1,2-dicarboxyethyl)-AMP + GDP + phosphate + 2 H(+). It functions in the pathway purine metabolism; AMP biosynthesis via de novo pathway; AMP from IMP: step 1/2. Functionally, plays an important role in the de novo pathway of purine nucleotide biosynthesis. Catalyzes the first committed step in the biosynthesis of AMP from IMP. This Parvibaculum lavamentivorans (strain DS-1 / DSM 13023 / NCIMB 13966) protein is Adenylosuccinate synthetase.